A 221-amino-acid polypeptide reads, in one-letter code: Thiopurine S-methyltransferase (221 aa).

Residues tryptophan 12, leucine 47, glutamate 68, and arginine 125 each coordinate S-adenosyl-L-methionine.

It belongs to the class I-like SAM-binding methyltransferase superfamily. TPMT family.

It is found in the cytoplasm. It catalyses the reaction S-adenosyl-L-methionine + a thiopurine = S-adenosyl-L-homocysteine + a thiopurine S-methylether.. This chain is Thiopurine S-methyltransferase, found in Legionella pneumophila (strain Corby).